Here is a 229-residue protein sequence, read N- to C-terminus: Small ribosomal subunit protein uS3 (229 aa).

Positions 39–107 (VRQFLIKELK…PAQINISEVR (69 aa)) constitute a KH type-2 domain.

It belongs to the universal ribosomal protein uS3 family. As to quaternary structure, part of the 30S ribosomal subunit. Forms a tight complex with proteins S10 and S14.

In terms of biological role, binds the lower part of the 30S subunit head. Binds mRNA in the 70S ribosome, positioning it for translation. The polypeptide is Small ribosomal subunit protein uS3 (Photobacterium profundum (strain SS9)).